Consider the following 314-residue polypeptide: MSNSASSFTGVSSGYTAGTPVPADSPIRDNIADAVRRVRETTPLAQSFTTFVTINLVANAQLAAGGTAAMSFLPDDVIETAKIAGANYINVGTLLPFYKDALPEIAQRLNYLDKPWVLDPVAAGIGRTRTAILQAFKAAPPTMIRANASEVIALANMWGLNTETVGDASEHRPAGVESVDDVESATGAAVALAQYLTEQHAKHSSHDASTRCAVAVSGIADLVTDGETVYRLPGGSAMMTKITGAGCSLGGVAATYLAVSDPLTAALSASLLYNRAGEVADTTSHGPGSFQVAFLDALWNVTAEQVAESEILVQ.

Substrate is bound at residue Met70. Residues Arg145 and Ser217 each coordinate ATP. Position 244 (Gly244) interacts with substrate.

This sequence belongs to the Thz kinase family. Mg(2+) serves as cofactor.

The catalysed reaction is 5-(2-hydroxyethyl)-4-methylthiazole + ATP = 4-methyl-5-(2-phosphooxyethyl)-thiazole + ADP + H(+). The protein operates within cofactor biosynthesis; thiamine diphosphate biosynthesis; 4-methyl-5-(2-phosphoethyl)-thiazole from 5-(2-hydroxyethyl)-4-methylthiazole: step 1/1. Catalyzes the phosphorylation of the hydroxyl group of 4-methyl-5-beta-hydroxyethylthiazole (THZ). The polypeptide is Hydroxyethylthiazole kinase (Bifidobacterium longum (strain DJO10A)).